The primary structure comprises 459 residues: Cysteine--tRNA ligase (459 aa).

C28 lines the Zn(2+) pocket. The 'HIGH' region motif lies at 30–40; the sequence is VTIYDLCHIGH. Positions 209, 234, and 238 each coordinate Zn(2+). A 'KMSKS' region motif is present at residues 266-270; it reads KMSKS. Position 269 (K269) interacts with ATP.

Belongs to the class-I aminoacyl-tRNA synthetase family. In terms of assembly, monomer. Zn(2+) is required as a cofactor.

Its subcellular location is the cytoplasm. It carries out the reaction tRNA(Cys) + L-cysteine + ATP = L-cysteinyl-tRNA(Cys) + AMP + diphosphate. This chain is Cysteine--tRNA ligase, found in Shewanella piezotolerans (strain WP3 / JCM 13877).